The sequence spans 303 residues: uncharacterized protein (303 aa).

Residues 15–74 enclose the S4 RNA-binding domain; the sequence is ERIDKFLASTENDWSRTQVQQWVKDGQVVVNGSAVKANYKIQPGDQVTVTVPEPEALDVL. Asp-138 is a catalytic residue.

Belongs to the pseudouridine synthase RluA family.

It carries out the reaction a uridine in RNA = a pseudouridine in RNA. This is an uncharacterized protein from Bacillus subtilis (strain 168).